The sequence spans 289 residues: 4-hydroxy-tetrahydrodipicolinate synthase (289 aa).

Position 44 (Thr44) interacts with pyruvate. Catalysis depends on Tyr132, which acts as the Proton donor/acceptor. The active-site Schiff-base intermediate with substrate is Lys161. A pyruvate-binding site is contributed by Ile201.

The protein belongs to the DapA family. Homotetramer; dimer of dimers.

It is found in the cytoplasm. The enzyme catalyses L-aspartate 4-semialdehyde + pyruvate = (2S,4S)-4-hydroxy-2,3,4,5-tetrahydrodipicolinate + H2O + H(+). Its pathway is amino-acid biosynthesis; L-lysine biosynthesis via DAP pathway; (S)-tetrahydrodipicolinate from L-aspartate: step 3/4. Functionally, catalyzes the condensation of (S)-aspartate-beta-semialdehyde [(S)-ASA] and pyruvate to 4-hydroxy-tetrahydrodipicolinate (HTPA). In Methanocaldococcus jannaschii (strain ATCC 43067 / DSM 2661 / JAL-1 / JCM 10045 / NBRC 100440) (Methanococcus jannaschii), this protein is 4-hydroxy-tetrahydrodipicolinate synthase.